Consider the following 73-residue polypeptide: UPF0154 protein MG335.1 homolog (73 aa).

A helical membrane pass occupies residues 6–26 (LALGLGIPLSLLVGVIIGYFI).

It belongs to the UPF0154 family.

Its subcellular location is the membrane. This is UPF0154 protein MG335.1 homolog from Mycoplasma pneumoniae (strain ATCC 29342 / M129 / Subtype 1) (Mycoplasmoides pneumoniae).